We begin with the raw amino-acid sequence, 364 residues long: DNA replication and repair protein RecF (364 aa).

30–37 (GANGSGKT) is an ATP binding site.

This sequence belongs to the RecF family.

The protein resides in the cytoplasm. The RecF protein is involved in DNA metabolism; it is required for DNA replication and normal SOS inducibility. RecF binds preferentially to single-stranded, linear DNA. It also seems to bind ATP. The polypeptide is DNA replication and repair protein RecF (Sodalis glossinidius).